Reading from the N-terminus, the 224-residue chain is PKHD-type hydroxylase HNE_1625 (224 aa).

The region spanning 77–175 (KFAPPLISCS…RFVFVGWIQS (99 aa)) is the Fe2OG dioxygenase domain. Fe cation is bound by residues H95, D97, and H156. A 2-oxoglutarate-binding site is contributed by R166.

The cofactor is Fe(2+). It depends on L-ascorbate as a cofactor.

The polypeptide is PKHD-type hydroxylase HNE_1625 (Hyphomonas neptunium (strain ATCC 15444)).